Consider the following 643-residue polypeptide: Maternal embryonic leucine zipper kinase (643 aa).

A Protein kinase domain is found at 11 to 263 (YELYETIGTG…MRNLLNHPWV (253 aa)). ATP is bound by residues 17–25 (IGTGGFAKV) and Lys40. Thr56 carries the phosphothreonine; by autocatalysis modification. The Proton acceptor role is filled by Asp132. Tyr163 carries the phosphotyrosine; by autocatalysis modification. Thr167 bears the Phosphothreonine; by autocatalysis mark. Residues Ser171 and Ser253 each carry the phosphoserine; by autocatalysis modification. The segment at 282 to 321 (LDEDCVTELSVHHRSSRQTMEDLISSWQYDHLTATYLLLL) is UBA-like. The tract at residues 326–643 (RGKPARLQLL…VEDILSGCKM (318 aa)) is autoinhibitory region. Residues Ser336 and Ser343 each carry the phosphoserine; by autocatalysis modification. Ser352 is subject to Phosphoserine. A phosphoserine; by autocatalysis mark is found at Ser399 and Ser423. Thr486 is subject to Phosphothreonine; by autocatalysis. A Phosphoserine modification is found at Ser490. Phosphoserine; by autocatalysis is present on Ser497. At Thr510 the chain carries Phosphothreonine. Ser521 bears the Phosphoserine; by autocatalysis mark. Thr531 carries the phosphothreonine; by autocatalysis modification. In terms of domain architecture, KA1 spans 594–643 (SDFGKVTMQFELEVCQLQRPDVVGIRRQRLKGDAWVYKRLVEDILSGCKM).

It belongs to the protein kinase superfamily. CAMK Ser/Thr protein kinase family. SNF1 subfamily. Monomer. Interacts with ZNF622 and PPP1R8. Post-translationally, autophosphorylated: autophosphorylation of the T-loop at Thr-167 and Ser-171 is required for activation. As to expression, expressed in testis, ovary, thymus, spleen and T-cell. Expressed by neural progenitors: highly enriched in cultures containing multipotent progenitors.

It is found in the cell membrane. The catalysed reaction is L-tyrosyl-[protein] + ATP = O-phospho-L-tyrosyl-[protein] + ADP + H(+). It carries out the reaction L-seryl-[protein] + ATP = O-phospho-L-seryl-[protein] + ADP + H(+). The enzyme catalyses L-threonyl-[protein] + ATP = O-phospho-L-threonyl-[protein] + ADP + H(+). Activated by autophosphorylation of the T-loop at Thr-167 and Ser-171: in contrast to other members of the SNF1 subfamily, phosphorylation at Thr-167 is not mediated by STK11/LKB1 but via autophosphorylation instead. Inhibited by calcium-binding. Kinase activity is also regulated by reducing agents: dithiothreitol (DTT) or reduced glutathione are required for kinase activity in vitro; such dependence is however not due to the presence of disulfide bonds. Functionally, serine/threonine-protein kinase involved in various processes such as cell cycle regulation, self-renewal of stem cells, apoptosis and splicing regulation. Has a broad substrate specificity; phosphorylates BCL2L14, CDC25B, MAP3K5/ASK1 and ZNF622. Acts as an activator of apoptosis by phosphorylating and activating MAP3K5/ASK1. Acts as a regulator of cell cycle, notably by mediating phosphorylation of CDC25B, promoting localization of CDC25B to the centrosome and the spindle poles during mitosis. Plays a key role in cell proliferation. Required for proliferation of embryonic and postnatal multipotent neural progenitors. Phosphorylates and inhibits BCL2L14. Also involved in the inhibition of spliceosome assembly during mitosis by phosphorylating ZNF622, thereby contributing to its redirection to the nucleus. May also play a role in primitive hematopoiesis. The chain is Maternal embryonic leucine zipper kinase (Melk) from Mus musculus (Mouse).